Here is a 353-residue protein sequence, read N- to C-terminus: Uroporphyrinogen decarboxylase (353 aa).

Substrate is bound by residues 33–37, D82, Y158, S213, and H332; that span reads RQAGR.

Belongs to the uroporphyrinogen decarboxylase family. Homodimer.

Its subcellular location is the cytoplasm. It carries out the reaction uroporphyrinogen III + 4 H(+) = coproporphyrinogen III + 4 CO2. It functions in the pathway porphyrin-containing compound metabolism; protoporphyrin-IX biosynthesis; coproporphyrinogen-III from 5-aminolevulinate: step 4/4. Its function is as follows. Catalyzes the decarboxylation of four acetate groups of uroporphyrinogen-III to yield coproporphyrinogen-III. This is Uroporphyrinogen decarboxylase from Gluconobacter oxydans (strain 621H) (Gluconobacter suboxydans).